Reading from the N-terminus, the 190-residue chain is Recombination protein RecR (190 aa).

The C4-type zinc-finger motif lies at Cys-58–Cys-73. A Toprim domain is found at Ser-81–Pro-167.

This sequence belongs to the RecR family.

In terms of biological role, may play a role in DNA repair. It seems to be involved in an RecBC-independent recombinational process of DNA repair. It may act with RecF and RecO. The protein is Recombination protein RecR of Nitratiruptor sp. (strain SB155-2).